The sequence spans 180 residues: Large ribosomal subunit protein uL5 (180 aa).

It belongs to the universal ribosomal protein uL5 family. In terms of assembly, part of the 50S ribosomal subunit; part of the 5S rRNA/L5/L18/L25 subcomplex. Contacts the 5S rRNA and the P site tRNA. Forms a bridge to the 30S subunit in the 70S ribosome.

This is one of the proteins that bind and probably mediate the attachment of the 5S RNA into the large ribosomal subunit, where it forms part of the central protuberance. In the 70S ribosome it contacts protein S13 of the 30S subunit (bridge B1b), connecting the 2 subunits; this bridge is implicated in subunit movement. Contacts the P site tRNA; the 5S rRNA and some of its associated proteins might help stabilize positioning of ribosome-bound tRNAs. The chain is Large ribosomal subunit protein uL5 from Lactobacillus acidophilus (strain ATCC 700396 / NCK56 / N2 / NCFM).